The following is a 311-amino-acid chain: Acetyl-coenzyme A carboxylase carboxyl transferase subunit alpha (311 aa).

The CoA carboxyltransferase C-terminal domain occupies 34-286 (EKDLQKEASK…KEYYLQNIRE (253 aa)).

It belongs to the AccA family. As to quaternary structure, acetyl-CoA carboxylase is a heterohexamer composed of biotin carboxyl carrier protein (AccB), biotin carboxylase (AccC) and two subunits each of ACCase subunit alpha (AccA) and ACCase subunit beta (AccD).

Its subcellular location is the cytoplasm. It carries out the reaction N(6)-carboxybiotinyl-L-lysyl-[protein] + acetyl-CoA = N(6)-biotinyl-L-lysyl-[protein] + malonyl-CoA. Its pathway is lipid metabolism; malonyl-CoA biosynthesis; malonyl-CoA from acetyl-CoA: step 1/1. In terms of biological role, component of the acetyl coenzyme A carboxylase (ACC) complex. First, biotin carboxylase catalyzes the carboxylation of biotin on its carrier protein (BCCP) and then the CO(2) group is transferred by the carboxyltransferase to acetyl-CoA to form malonyl-CoA. The polypeptide is Acetyl-coenzyme A carboxylase carboxyl transferase subunit alpha (Nitratiruptor sp. (strain SB155-2)).